A 450-amino-acid polypeptide reads, in one-letter code: TATA box-binding protein-associated factor RNA polymerase I subunit A (450 aa).

Component of the transcription factor SL1/TIF-IB complex, composed of TBP and at least TAF1A, TAF1B, TAF1C and TAF1D. In the complex interacts directly with TBP, TAF1A and TAF1B. Interaction of the SL1/TIF-IB subunits with TBP excludes interaction of TBP with the transcription factor IID (TFIID) subunits. Interacts with UBFT. Interacts with CEBPA (isoform 1 and isoform 4). Part of Pol I pre-initiation complex (PIC), in which Pol I core assembles with RRN3 and promoter-bound UTBF and SL1/TIF-IB complex.

It localises to the nucleus. Its subcellular location is the nucleolus. Component of the transcription factor SL1/TIF-IB complex, which is involved in the assembly of the PIC (pre-initiation complex) during RNA polymerase I-dependent transcription. The rate of PIC formation probably is primarily dependent on the rate of association of SL1/TIF-IB with the rDNA promoter. SL1/TIF-IB is involved in stabilization of nucleolar transcription factor 1/UBTF on rDNA. Formation of SL1/TIF-IB excludes the association of TBP with TFIID subunits. The sequence is that of TATA box-binding protein-associated factor RNA polymerase I subunit A (TAF1A) from Homo sapiens (Human).